Here is a 278-residue protein sequence, read N- to C-terminus: Protoheme IX farnesyltransferase 1 (278 aa).

9 helical membrane passes run 12-32 (VIWLLILASVAGYIYGGGGVD), 35-55 (LFSLLAVAFLSTGGSAAFNHY), 76-96 (LITPNAALAYSLALSATGISL), 98-118 (FLLLGLLPGLFVLLGWLFYAV), 129-149 (WLNIFGGGFAGNAVFLGGYAL), 158-178 (AVLISFAIYLWIPSHIWALAF), 199-221 (ERAVAVISAINAAAAAYILWLYL), 226-248 (GAGGALVALGVAATIATSIYAAV), and 255-275 (MWKMYKASSPILALFLIALIL).

It belongs to the UbiA prenyltransferase family. Protoheme IX farnesyltransferase subfamily.

The protein localises to the cell membrane. The catalysed reaction is heme b + (2E,6E)-farnesyl diphosphate + H2O = Fe(II)-heme o + diphosphate. It functions in the pathway porphyrin-containing compound metabolism; heme O biosynthesis; heme O from protoheme: step 1/1. In terms of biological role, converts heme B (protoheme IX) to heme O by substitution of the vinyl group on carbon 2 of heme B porphyrin ring with a hydroxyethyl farnesyl side group. The sequence is that of Protoheme IX farnesyltransferase 1 from Pyrobaculum aerophilum (strain ATCC 51768 / DSM 7523 / JCM 9630 / CIP 104966 / NBRC 100827 / IM2).